A 188-amino-acid chain; its full sequence is Proline-rich protein 3 (188 aa).

Positions 1-157 are disordered; it reads MPKRKKQNQH…DPQVMEDKSD (157 aa). Composition is skewed to pro residues over residues 35-46 and 69-82; these read IGPPSLLGPPPM and LIPPLLSLPPPPWG. Residues 83 to 96 show a composition bias toward low complexity; sequence RGPIRRGLGPRSSP. Residues 145–157 show a composition bias toward basic and acidic residues; sequence PKDDPQVMEDKSD. The segment at 155 to 183 adopts a C3H1-type zinc-finger fold; that stretch reads KSDRPVCRHFAKKGHCRYEDLCAFYHPGV.

This is Proline-rich protein 3 (PRR3) from Pan troglodytes (Chimpanzee).